Reading from the N-terminus, the 84-residue chain is MKRMILFTSCLLLIDIVVGGKEGYPADSKGCKVTCFLTAAGYCNTECKLQKASSGYCAWPACYCYGLPDSASVWDSATNKCGKK.

A signal peptide spans 1–19 (MKRMILFTSCLLLIDIVVG). Residues 21-82 (KEGYPADSKG…VWDSATNKCG (62 aa)) enclose the LCN-type CS-alpha/beta domain. Disulfide bonds link C31–C81, C35–C57, C43–C62, and C47–C64. Residue C81 is modified to Cysteine amide. Positions 82–84 (GKK) are excised as a propeptide.

As to expression, expressed by the venom gland.

It is found in the secreted. Its function is as follows. This protein is not toxic. It induces an immune response similar to that induced by whole venom. Thus, polyclonal antibodies raised against this protein can neutralize the effects of the venom. This Tityus costatus (Brazilian scorpion) protein is Toxin-like TcoNTxP1.